The chain runs to 240 residues: MGGCVGSHHDSSGSLNENSDGTGVALGRNQPLKREKPKWKSDYPMTDGQLRSKRDEFWDTAPAFEGRKEIWDALKAAAQAFESNDHELAQAIIDGASITLPHGALTECYDELGNRYQLPVYCLSPPVNMIEEKSESETIEVPEAPASEGQECQLRLRLSTGRDLRLAVRTSDSVQQMKRRLQTQEGVAATSQRWFFSGRPLTDKMKLEELKISRDYVVQVIVSQPPTTPPLPQNPTPVEN.

A disordered region spans residues 1–48 (MGGCVGSHHDSSGSLNENSDGTGVALGRNQPLKREKPKWKSDYPMTDG). Over residues 12–21 (SGSLNENSDG) the composition is skewed to polar residues. Residues 32–41 (LKREKPKWKS) show a composition bias toward basic and acidic residues. One can recognise a Ubiquitin-like domain in the interval 152 to 227 (CQLRLRLSTG…VQVIVSQPPT (76 aa)).

The protein localises to the cytoplasm. This is Ubiquitin domain-containing protein 2 (ubtd2) from Danio rerio (Zebrafish).